A 691-amino-acid chain; its full sequence is Elongation factor G (691 aa).

The tr-type G domain occupies 8-283 (KKVRNIGIAA…AVVAYLPAPD (276 aa)). Residues 17-24 (AHIDAGKT), 81-85 (DTPGH), and 135-138 (NKMD) contribute to the GTP site.

Belongs to the TRAFAC class translation factor GTPase superfamily. Classic translation factor GTPase family. EF-G/EF-2 subfamily.

The protein localises to the cytoplasm. Catalyzes the GTP-dependent ribosomal translocation step during translation elongation. During this step, the ribosome changes from the pre-translocational (PRE) to the post-translocational (POST) state as the newly formed A-site-bound peptidyl-tRNA and P-site-bound deacylated tRNA move to the P and E sites, respectively. Catalyzes the coordinated movement of the two tRNA molecules, the mRNA and conformational changes in the ribosome. The polypeptide is Elongation factor G (Campylobacter jejuni subsp. jejuni serotype O:6 (strain 81116 / NCTC 11828)).